The following is a 105-amino-acid chain: Integration host factor subunit beta (105 aa).

The protein belongs to the bacterial histone-like protein family. Heterodimer of an alpha and a beta chain.

This protein is one of the two subunits of integration host factor, a specific DNA-binding protein that functions in genetic recombination as well as in transcriptional and translational control. This Bradyrhizobium sp. (strain ORS 278) protein is Integration host factor subunit beta.